The primary structure comprises 236 residues: Peptidase E (236 aa).

Active-site charge relay system residues include Ser-122, Asp-137, and His-159.

This sequence belongs to the peptidase S51 family.

The protein resides in the cytoplasm. The catalysed reaction is Dipeptidase E catalyzes the hydrolysis of dipeptides Asp-|-Xaa. It does not act on peptides with N-terminal Glu, Asn or Gln, nor does it cleave isoaspartyl peptides.. Its function is as follows. Hydrolyzes dipeptides containing N-terminal aspartate residues. May play a role in allowing the cell to use peptide aspartate to spare carbon otherwise required for the synthesis of the aspartate family of amino acids. This chain is Peptidase E, found in Shewanella sp. (strain W3-18-1).